The chain runs to 393 residues: Chorismate synthase (393 aa).

The NADP(+) site is built by arginine 40 and arginine 46. Residues 135-137, 257-258, glycine 301, 316-320, and arginine 342 contribute to the FMN site; these read RAS, QA, and KPIAT. The segment at 280-306 is disordered; it reads DEIDVGPDGIRRRSNRAGGVEGGMSTG.

The protein belongs to the chorismate synthase family. Homotetramer. The cofactor is FMNH2.

The enzyme catalyses 5-O-(1-carboxyvinyl)-3-phosphoshikimate = chorismate + phosphate. The protein operates within metabolic intermediate biosynthesis; chorismate biosynthesis; chorismate from D-erythrose 4-phosphate and phosphoenolpyruvate: step 7/7. Its function is as follows. Catalyzes the anti-1,4-elimination of the C-3 phosphate and the C-6 proR hydrogen from 5-enolpyruvylshikimate-3-phosphate (EPSP) to yield chorismate, which is the branch point compound that serves as the starting substrate for the three terminal pathways of aromatic amino acid biosynthesis. This reaction introduces a second double bond into the aromatic ring system. This chain is Chorismate synthase, found in Thermobifida fusca (strain YX).